The primary structure comprises 77 residues: Large ribosomal subunit protein eL13 (77 aa).

The protein belongs to the eukaryotic ribosomal protein eL13 family.

The polypeptide is Large ribosomal subunit protein eL13 (Sulfurisphaera tokodaii (strain DSM 16993 / JCM 10545 / NBRC 100140 / 7) (Sulfolobus tokodaii)).